Here is a 552-residue protein sequence, read N- to C-terminus: Serine palmitoyltransferase 3 (552 aa).

Residues 1-29 (MANPGGGAVCNGKLHNHKKQSNGSQSRNC) form a disordered region. A helical membrane pass occupies residues 59–79 (PLHVMVFTYMGYGIGTLFGYL). K371 is modified (N6-(pyridoxal phosphate)lysine).

It belongs to the class-II pyridoxal-phosphate-dependent aminotransferase family. Component of the serine palmitoyltransferase (SPT) complex, which is composed of SPTLC1, SPTLC2 or SPTLC3 and SPTSSA or SPTSSB. The heterodimer consisting of SPTLC1 and SPTLC2/SPTLC3 forms the catalytic core of the enzyme, while SPTSSA or SPTSSB subunits determine substrate specificity. SPT also interacts with ORMDL proteins, especially ORMDL3, which negatively regulate SPT activity in the presence of ceramides. Pyridoxal 5'-phosphate serves as cofactor. Expressed in most tissues, except peripheral blood cells and bone marrow, with highest levels in heart, kidney, liver, uterus and skin.

It is found in the endoplasmic reticulum membrane. It catalyses the reaction L-serine + hexadecanoyl-CoA + H(+) = 3-oxosphinganine + CO2 + CoA. The catalysed reaction is dodecanoyl-CoA + L-serine + H(+) = 3-oxotetradecasphinganine + CO2 + CoA. The enzyme catalyses tetradecanoyl-CoA + L-serine + H(+) = 3-oxohexadecasphinganine + CO2 + CoA. It carries out the reaction octadecanoyl-CoA + L-serine + H(+) = 3-oxoeicosasphinganine + CO2 + CoA. It participates in lipid metabolism; sphingolipid metabolism. With respect to regulation, SPT complex catalytic activity is negatively regulated by ORMDL proteins, including ORMDL3, in the presence of ceramides. This mechanism allows to maintain ceramide levels at sufficient concentrations for the production of complex sphingolipids, but which prevents the accumulation of ceramides to levels that trigger apoptosis. In terms of biological role, component of the serine palmitoyltransferase multisubunit enzyme (SPT) that catalyzes the initial and rate-limiting step in sphingolipid biosynthesis by condensing L-serine and activated acyl-CoA (most commonly palmitoyl-CoA) to form long-chain bases. The SPT complex is composed of SPTLC1, SPTLC2 or SPTLC3 and SPTSSA or SPTSSB. Within this complex, the heterodimer consisting of SPTLC1 and SPTLC2/SPTLC3 forms the catalytic core. The composition of the serine palmitoyltransferase (SPT) complex determines the substrate preference. The SPTLC1-SPTLC2-SPTSSA complex shows a strong preference for C16-CoA substrate, while the SPTLC1-SPTLC3-SPTSSA isozyme uses both C14-CoA and C16-CoA as substrates, with a slight preference for C14-CoA. The SPTLC1-SPTLC2-SPTSSB complex shows a strong preference for C18-CoA substrate, while the SPTLC1-SPTLC3-SPTSSB isozyme displays an ability to use a broader range of acyl-CoAs, without apparent preference. The polypeptide is Serine palmitoyltransferase 3 (Homo sapiens (Human)).